Here is a 79-residue protein sequence, read N- to C-terminus: MSRLGIMVLTLLLLVFIVTSHQDAGEKQATKRAAVNFRWRRSFTRRAAAEECEEYCEEEEKTCCGEEDGEPVCAEFCLG.

The signal sequence occupies residues 1-20; sequence MSRLGIMVLTLLLLVFIVTS. Residues 21–44 constitute a propeptide that is removed on maturation; that stretch reads HQDAGEKQATKRAAVNFRWRRSFT. 3 cysteine pairs are disulfide-bonded: Cys52–Cys64, Cys56–Cys73, and Cys63–Cys77. Leu78 is subject to Leucine amide.

The protein belongs to the conotoxin O3 superfamily. As to expression, expressed by the venom duct.

It localises to the secreted. This Conus arenatus (Sand-dusted cone) protein is Conotoxin ArMSGL-0123.